The chain runs to 1116 residues: Rho GTPase-activating protein 45 (1116 aa).

The segment at 1–72 is disordered; the sequence is MFSRKKRELM…RPTSLSRHAS (72 aa). A compositionally biased stretch (polar residues) spans 22-31; the sequence is GSPNPQSSSG. 4 positions are modified to phosphoserine: Ser-23, Ser-72, Ser-92, and Ser-98. In terms of domain architecture, F-BAR spans 268-538; the sequence is EEVDMLLQRC…SSKLYDPGQQ (271 aa). The stretch at 375–498 forms a coiled coil; it reads EHERRRKEIK…QIQEVIRQSD (124 aa). A disordered region spans residues 422–457; sequence VAKAEEEQQGTGPGAGTAASKALDKRRRLEEEAKNK. Over residues 448 to 457 the composition is skewed to basic and acidic residues; that stretch reads RRLEEEAKNK. Ser-568, Ser-577, Ser-591, and Ser-618 each carry phosphoserine. The interval 569-658 is disordered; it reads PIMRTRKGSF…MSSSEELGDQ (90 aa). Residues 621–635 show a composition bias toward polar residues; it reads ISISDTEVGLDTSSG. The segment covering 643 to 652 has biased composition (low complexity); sequence TSSSGTMSSS. A Phorbol-ester/DAG-type zinc finger spans residues 699–744; it reads THRLRKLRTPAKCRECNSYVYFQGAECEECCLACHKKCLETLAIQC. The Rho-GAP domain maps to 758–971; the sequence is QDFSQAALST…TLIVHYGLVF (214 aa). 4 positions are modified to phosphoserine: Ser-946, Ser-1017, Ser-1020, and Ser-1022. Disordered regions lie at residues 1004–1035 and 1050–1116; these read EEAEDGSRESHAASNDSDSELEDASDPLSSSD and AGLE…PQFV. 2 stretches are compositionally biased toward polar residues: residues 1080–1090 and 1105–1116; these read FNTNQSNNTSR and GGTSQERQPQFV.

It is found in the cytoplasm. It localises to the cell projection. Its subcellular location is the ruffle membrane. Contains a GTPase activator for the Rho-type GTPases (RhoGAP) domain that would be able to negatively regulate the actin cytoskeleton as well as cell spreading. However, also contains N-terminally a BAR-domin which is able to play an autoinhibitory effect on this RhoGAP activity. The protein is Rho GTPase-activating protein 45 of Mus musculus (Mouse).